We begin with the raw amino-acid sequence, 190 residues long: UPF0301 protein Rpic_0619 (190 aa).

The protein belongs to the UPF0301 (AlgH) family.

This is UPF0301 protein Rpic_0619 from Ralstonia pickettii (strain 12J).